Consider the following 255-residue polypeptide: Indole-3-glycerol phosphate synthase (255 aa).

The protein belongs to the TrpC family.

The enzyme catalyses 1-(2-carboxyphenylamino)-1-deoxy-D-ribulose 5-phosphate + H(+) = (1S,2R)-1-C-(indol-3-yl)glycerol 3-phosphate + CO2 + H2O. It functions in the pathway amino-acid biosynthesis; L-tryptophan biosynthesis; L-tryptophan from chorismate: step 4/5. The polypeptide is Indole-3-glycerol phosphate synthase (Streptococcus pneumoniae serotype 2 (strain D39 / NCTC 7466)).